We begin with the raw amino-acid sequence, 316 residues long: L-lactate dehydrogenase (316 aa).

Residues V15, D37, K42, Y68, and 82–83 (GL) each bind NAD(+). Residues Q85, R91, and 123 to 126 (NPVD) each bind substrate. Residues 121-123 (ASN) and T146 contribute to the NAD(+) site. 151-154 (DTSR) is a binding site for substrate. Beta-D-fructose 1,6-bisphosphate is bound by residues R156 and H171. Residue H178 is the Proton acceptor of the active site. At Y222 the chain carries Phosphotyrosine. Residue T231 participates in substrate binding.

The protein belongs to the LDH/MDH superfamily. LDH family. In terms of assembly, homotetramer.

Its subcellular location is the cytoplasm. It catalyses the reaction (S)-lactate + NAD(+) = pyruvate + NADH + H(+). It functions in the pathway fermentation; pyruvate fermentation to lactate; (S)-lactate from pyruvate: step 1/1. With respect to regulation, allosterically activated by fructose 1,6-bisphosphate (FBP). Its function is as follows. Catalyzes the conversion of lactate to pyruvate. The sequence is that of L-lactate dehydrogenase from Borreliella burgdorferi (strain ATCC 35210 / DSM 4680 / CIP 102532 / B31) (Borrelia burgdorferi).